The primary structure comprises 384 residues: Gastrin-releasing peptide receptor (384 aa).

At 1–38 the chain is on the extracellular side; the sequence is MALNDCFLLNLEVDHFMHCNISSHSADLPVNDDWSHPG. N-linked (GlcNAc...) asparagine glycosylation occurs at asparagine 20. Residues 39-62 form a helical membrane-spanning segment; that stretch reads ILYVIPAVYGVIILIGLIGNITLI. Topologically, residues 63 to 76 are cytoplasmic; that stretch reads KIFCTVKSMRNVPN. Residues 77 to 96 form a helical membrane-spanning segment; the sequence is LFISSLALGDLLLLITCAPV. At 97 to 114 the chain is on the extracellular side; that stretch reads DASRYLADRWLFGRIGCK. Cysteine 113 and cysteine 196 are joined by a disulfide. A helical transmembrane segment spans residues 115 to 136; sequence LIPFIQLTSVGVSVFTLTALSA. Residues 137 to 152 are Cytoplasmic-facing; sequence DRYKAIVRPMDIQASH. A helical transmembrane segment spans residues 153 to 174; sequence ALMKICLKAAFIWIISMLLAIP. The Extracellular portion of the chain corresponds to 175-208; it reads EAVFSDLHPFHEESTNQTFISCAPYPHSNELHPK. Residues 209-234 traverse the membrane as a helical segment; the sequence is IHSMASFLVFYVIPLSIISVYYYFIA. Topologically, residues 235-264 are cytoplasmic; sequence KNLIQSAYNLPVEGNIHVKKQIESRKRLAK. Residues 265–285 traverse the membrane as a helical segment; it reads TVLVFVGLFAFCWLPNHVIYL. The Extracellular segment spans residues 286-298; sequence YRSYHYSEVDTSM. A helical transmembrane segment spans residues 299–325; it reads LHFVTSICARLLAFTNSCVNPFALYLL. The Cytoplasmic segment spans residues 326 to 384; sequence SKSFRKQFNTQLLCCQPGLIIRSHSTGRSTTCMTSLKSTNPSVATFSLINGNICHERYV. Cysteine 339 carries S-palmitoyl cysteine lipidation. Serine 350 is subject to Phosphoserine.

The protein belongs to the G-protein coupled receptor 1 family. Highly expressed in pancreas. Also expressed in stomach, adrenal cortex and brain. In brain, expressed in cells throughout the cortex.

The protein localises to the cell membrane. Receptor for gastrin-releasing peptide (GRP). Signals via association with G proteins that activate a phosphatidylinositol-calcium second messenger system, resulting in Akt phosphorylation. Contributes to the regulation of food intake. Contributes to the perception of prurient stimuli and transmission of itch signals in the spinal cord that promote scratching behavior, but does not play a role in the perception of pain. Contributes primarily to nonhistaminergic itch sensation. In one study, shown to act in the amygdala as part of an inhibitory network which inhibits memory specifically related to learned fear. In another study, shown to contribute to disinhibition of glutamatergic cells in the auditory cortex via signaling on vasoactive intestinal peptide-expressing cells which leads to enhanced auditory fear memories. Contributes to the induction of sighing through signaling in the pre-Botzinger complex, a cluster of several thousand neurons in the ventrolateral medulla responsible for inspiration during respiratory activity. The sequence is that of Gastrin-releasing peptide receptor (GRPR) from Homo sapiens (Human).